The following is a 325-amino-acid chain: Tyrosine phosphatase H2 (325 aa).

Residues 27-295 (VTREHEKIMA…FFCYRVMERY (269 aa)) enclose the Tyrosine-protein phosphatase domain. Cys-236 (phosphocysteine intermediate) is an active-site residue.

This sequence belongs to the protein-tyrosine phosphatase family.

Its subcellular location is the host cytoplasm. The catalysed reaction is O-phospho-L-tyrosyl-[protein] + H2O = L-tyrosyl-[protein] + phosphate. Suppresses host immune cell adhesion and phagocytosis. Triggers host mitochondrial membrane depolarization and caspase-dependent apoptosis. The sequence is that of Tyrosine phosphatase H2 (H2) from Microplitis demolitor bracovirus (isolate Webb) (MdBV).